The primary structure comprises 380 residues: Shedu protein SduA (380 aa).

Its function is as follows. Only component of antiviral defense system Shedu. Expression of Shedu in B.subtilis (strain BEST7003) confers resistance to phages phi105, phi29, rho14 and to a lesser extent to SPP1. May be an endonuclease. In Bacillus cereus (strain B4264), this protein is Shedu protein SduA.